Consider the following 337-residue polypeptide: tRNA N6-adenosine threonylcarbamoyltransferase (337 aa).

Residues H111 and H115 each contribute to the Fe cation site. Substrate is bound by residues 134-138 (LVSGG), D167, G180, and N272. D300 provides a ligand contact to Fe cation.

It belongs to the KAE1 / TsaD family. Fe(2+) serves as cofactor.

Its subcellular location is the cytoplasm. It catalyses the reaction L-threonylcarbamoyladenylate + adenosine(37) in tRNA = N(6)-L-threonylcarbamoyladenosine(37) in tRNA + AMP + H(+). In terms of biological role, required for the formation of a threonylcarbamoyl group on adenosine at position 37 (t(6)A37) in tRNAs that read codons beginning with adenine. Is involved in the transfer of the threonylcarbamoyl moiety of threonylcarbamoyl-AMP (TC-AMP) to the N6 group of A37, together with TsaE and TsaB. TsaD likely plays a direct catalytic role in this reaction. This Photorhabdus laumondii subsp. laumondii (strain DSM 15139 / CIP 105565 / TT01) (Photorhabdus luminescens subsp. laumondii) protein is tRNA N6-adenosine threonylcarbamoyltransferase.